The following is an 89-amino-acid chain: Small ribosomal subunit protein uS15 (89 aa).

The segment covering 1–21 (MALSKEQKTETLKEFGLHETD) has biased composition (basic and acidic residues). The interval 1 to 22 (MALSKEQKTETLKEFGLHETDT) is disordered.

The protein belongs to the universal ribosomal protein uS15 family. In terms of assembly, part of the 30S ribosomal subunit. Forms a bridge to the 50S subunit in the 70S ribosome, contacting the 23S rRNA.

Functionally, one of the primary rRNA binding proteins, it binds directly to 16S rRNA where it helps nucleate assembly of the platform of the 30S subunit by binding and bridging several RNA helices of the 16S rRNA. Its function is as follows. Forms an intersubunit bridge (bridge B4) with the 23S rRNA of the 50S subunit in the ribosome. This Corynebacterium jeikeium (strain K411) protein is Small ribosomal subunit protein uS15.